We begin with the raw amino-acid sequence, 389 residues long: Transaldolase (389 aa).

Lys136 functions as the Schiff-base intermediate with substrate in the catalytic mechanism. 2 consecutive EF-hand domains span residues 330 to 365 (ALNQAFESIFRTFDLDGDGFITREEWMGTDAVFDAI) and 365 to 388 (IDLNHDGKITAEELGAGIGAVSKL). Residues Asp343, Asp345, Asp347, Glu354, Asp366, Asn368, Asp370, Lys372, and Glu377 each coordinate Ca(2+).

Belongs to the transaldolase family. Type 1 subfamily.

It localises to the cytoplasm. It catalyses the reaction D-sedoheptulose 7-phosphate + D-glyceraldehyde 3-phosphate = D-erythrose 4-phosphate + beta-D-fructose 6-phosphate. Its pathway is carbohydrate degradation; pentose phosphate pathway; D-glyceraldehyde 3-phosphate and beta-D-fructose 6-phosphate from D-ribose 5-phosphate and D-xylulose 5-phosphate (non-oxidative stage): step 2/3. Transaldolase is important for the balance of metabolites in the pentose-phosphate pathway. The chain is Transaldolase from Gloeobacter violaceus (strain ATCC 29082 / PCC 7421).